Consider the following 281-residue polypeptide: NADH-cytochrome b5 reductase 1 (281 aa).

A helical membrane pass occupies residues 2–22 (VPGKFIFTATFVLLCTIIAVV). Residues 37–141 (EKLQEFPLVA…RGPKGFYHYQ (105 aa)) form the FAD-binding FR-type domain. FAD is bound by residues 121-136 (AQLNIGDKIKVRGPKG) and 147-179 (EIGMIAGGTGIAPMYQIMKSIFANDSDKTKVSL).

Belongs to the flavoprotein pyridine nucleotide cytochrome reductase family. Monomer. Component of the 2-(3-amino-3-carboxypropyl)histidine synthase complex composed of DPH1, DPH2, DPH3 and a NADH-dependent reductase, predominantly CBR1. FAD is required as a cofactor.

Its subcellular location is the mitochondrion outer membrane. The catalysed reaction is 2 Fe(III)-[cytochrome b5] + NADH = 2 Fe(II)-[cytochrome b5] + NAD(+) + H(+). It carries out the reaction 2 Fe(3+)-[Dph3] + NADH = 2 Fe(2+)-[Dph3] + NAD(+) + H(+). The protein operates within protein modification; peptidyl-diphthamide biosynthesis. In terms of biological role, NADH-dependent reductase for DPH3 and cytochrome b5. Required for the first step of diphthamide biosynthesis, a post-translational modification of histidine which occurs in elongation factor 2. DPH1 and DPH2 transfer a 3-amino-3-carboxypropyl (ACP) group from S-adenosyl-L-methionine (SAM) to a histidine residue, the reaction is assisted by a reduction system comprising DPH3 and a NADH-dependent reductase, predominantly CBR1. By reducing DPH3, also involved in the formation of the tRNA wobble base modification mcm5s 2U (5-methoxycarbonylmethyl-2-thiouridine), mediated by the elongator complex. The cytochrome b5/NADH cytochrome b5 reductase electron transfer system supports the catalytic activity of several sterol biosynthetic enzymes. In Kluyveromyces lactis (strain ATCC 8585 / CBS 2359 / DSM 70799 / NBRC 1267 / NRRL Y-1140 / WM37) (Yeast), this protein is NADH-cytochrome b5 reductase 1 (CBR1).